The following is a 244-amino-acid chain: 3-oxoacyl-[acyl-carrier-protein] reductase FabG (244 aa).

NADP(+) contacts are provided by residues 9-12 (GASR), 60-61 (NV), and Asn-87. Position 139 (Ser-139) interacts with substrate. The active-site Proton acceptor is Tyr-152. NADP(+) contacts are provided by residues 152–156 (YVATK) and Ile-185.

The protein belongs to the short-chain dehydrogenases/reductases (SDR) family. Homotetramer.

It carries out the reaction a (3R)-hydroxyacyl-[ACP] + NADP(+) = a 3-oxoacyl-[ACP] + NADPH + H(+). It functions in the pathway lipid metabolism; fatty acid biosynthesis. Catalyzes the NADPH-dependent reduction of beta-ketoacyl-ACP substrates to beta-hydroxyacyl-ACP products, the first reductive step in the elongation cycle of fatty acid biosynthesis. This chain is 3-oxoacyl-[acyl-carrier-protein] reductase FabG (fabG), found in Staphylococcus epidermidis (strain ATCC 35984 / DSM 28319 / BCRC 17069 / CCUG 31568 / BM 3577 / RP62A).